Consider the following 700-residue polypeptide: MARITPIERYRNIGISAHIDAGKTTTSERILFYTGVSHKIGEVHDGAATMDWMEQEQERGITITSAATTAFWSGMSQQFQQHRINVIDTPGHVDFTIEVERSMRVLDGAVMVYCAVGGVQPQSETVWRQANKYQVPRIAFVNKMDRTGANFLRVVEQLKTRLGANAVPLQLPVGAEDNFKGVVDLIKMKAINWNEEDQGMTFTYDDIPADMLEACEEWRNNLVEAAAESSEELMEKYLGGEELTEEEIKGALRARVLANEIILVTCGSAFKNKGVQAMLDAVVEYLPSPVDIPAIKGINEDETEGERHASDDEPFAALAFKIATDPFVGNLTFFRVYSGVVNSGDTVVNSVRQKRERFGRIVQMHANKREEIKEVRAGDIAAAIGLKDVTTGDTLCDPNAPIILERMEFPDPVISVAVEPKTKADQEKMGLALGRLAQEDPSFRVHTDEESGETIISGMGELHLDIIVDRMKREFKVEANIGKPQVSYRETIRTRVNDVEGKHAKQSGGRGQYGHVVIDLYPLDPEGPGYEFVNEIKGGVIPGEYIPAVDKGIQEQLKSGPLAGYPVVDIGVRLHFGSYHDVDSSELAFKLAASIAFKAAFNKANPVLLEPIMKVEVETPPEYVGDVIGDLSRRRAMVNGQEANDFVVKINAEVPLSEMFGYATDLRSQTQGRASYSMEPLKYAEAPTSVAAAVIEARKK.

The region spanning 8–290 (ERYRNIGISA…AVVEYLPSPV (283 aa)) is the tr-type G domain. GTP is bound by residues 17–24 (AHIDAGKT), 88–92 (DTPGH), and 142–145 (NKMD).

Belongs to the TRAFAC class translation factor GTPase superfamily. Classic translation factor GTPase family. EF-G/EF-2 subfamily.

Its subcellular location is the cytoplasm. Its function is as follows. Catalyzes the GTP-dependent ribosomal translocation step during translation elongation. During this step, the ribosome changes from the pre-translocational (PRE) to the post-translocational (POST) state as the newly formed A-site-bound peptidyl-tRNA and P-site-bound deacylated tRNA move to the P and E sites, respectively. Catalyzes the coordinated movement of the two tRNA molecules, the mRNA and conformational changes in the ribosome. The protein is Elongation factor G of Mannheimia succiniciproducens (strain KCTC 0769BP / MBEL55E).